The primary structure comprises 757 residues: MKIQHIIHENQLGLLFQQGSFGLEKESQRVTADGAIVTTPHPAVFGNRRYHPYIQTDFAESQLELITPPTKKLEDTFRWLSVIHEVVQRSLPEEEYIFPLSMPAGLPAEEQIRVAQLDNPEDVAYREYLVKIYGKNKQMVSGIHYNFQLSPDLITRLFRLQNEYQSAVDFQNDLYLKMAKNFLRYQWILLYLLAATPTVESAYFKDGSPLAKGQFVRSLRSSQYGYVNDPEINVSFDSVEKYVESLEHWVSTGKLIAEKEFYSNVRLRGAKKAREFLTTGIQYLEFRLFDLNPFEIYGISLKDAKFIHVFALFMIWMDHTADQEEVELGKARLAEVAFEHPLEKTAYAVEGELVLLELLSMLEQIGAEPELFEIVKEKLTQFTDPSKTVAGRLVRAIEQAGSDQQLGAQLAQQYKAQAFERFYALSAFDNMELSTQALLFDVIQKGIHTEILDENDQFLCLKYGDHIEYVKNGNMTSHDSYISPLIMENKVVTKKVLQKAGFNVPQSVEFTSLEKAVASYALFENRAVVIKPKSTNYGLGITIFQQGVQNREDFAKALEIAFREDKEVMVEDYLVGTEYRFFVLGDETLAVLLRVPANVVGDSVHSVAELVAMKNDHPLRGDGSRTPLKKIALGEIEQLQLKEQGLTIDSIPAKDQLVQLRANSNISTGGDSIDMTDEMHESYKQLAVGITKAMGAAVCGVDLIIPDLKQPATPNLTSWGVIEANFNPMMMMHIFPYAGKSRRLTQNVIKMLFPELE.

The interval 1-337 is glutamate--cysteine ligase; the sequence is MKIQHIIHEN…LGKARLAEVA (337 aa). Residues 494–753 enclose the ATP-grasp domain; sequence KKVLQKAGFN…LTQNVIKMLF (260 aa). 521 to 580 contacts ATP; the sequence is ALFENRAVVIKPKSTNYGLGITIFQQGVQNREDFAKALEIAFREDKEVMVEDYLVGTEYR. Mg(2+) is bound by residues Asp-702, Glu-723, and Asn-725. Mn(2+) contacts are provided by Asp-702, Glu-723, and Asn-725.

In the N-terminal section; belongs to the glutamate--cysteine ligase type 1 family. Type 2 subfamily. Monomer. Mg(2+) serves as cofactor. The cofactor is Mn(2+).

The enzyme catalyses L-cysteine + L-glutamate + ATP = gamma-L-glutamyl-L-cysteine + ADP + phosphate + H(+). It catalyses the reaction gamma-L-glutamyl-L-cysteine + glycine + ATP = glutathione + ADP + phosphate + H(+). The protein operates within sulfur metabolism; glutathione biosynthesis; glutathione from L-cysteine and L-glutamate: step 1/2. It participates in sulfur metabolism; glutathione biosynthesis; glutathione from L-cysteine and L-glutamate: step 2/2. Functionally, synthesizes glutathione from L-glutamate and L-cysteine via gamma-L-glutamyl-L-cysteine. The protein is Glutathione biosynthesis bifunctional protein GshAB of Pasteurella multocida (strain Pm70).